Reading from the N-terminus, the 255-residue chain is FMR1 neighbor protein (255 aa).

Residues 1–68 (MSSHRRKAKG…ESLKMRVSKP (68 aa)) are Cytoplasmic-facing. A helical membrane pass occupies residues 69-89 (FGMLMLSIWILLFVCYYLSYY). The Extracellular segment spans residues 90 to 183 (LCSGSSYFVL…FAPFRDVPKQ (94 aa)). Residues 125–184 (LLNFFFPTTCNLRENQVAKPCNELQDLSESECLRHKCCFSSSGTTSFKCFAPFRDVPKQM) enclose the P-type domain. The helical transmembrane segment at 184-204 (MMQMFGLGAISLILVCLPIYC) threads the bilayer. Residues 205–255 (RSLFWRSEPADDLQRQDNRVVTGLKKQRRKRKRKSEMLQKAARGREEHGDE) lie on the Cytoplasmic side of the membrane. The interval 220 to 255 (QDNRVVTGLKKQRRKRKRKSEMLQKAARGREEHGDE) is disordered. Basic residues predominate over residues 229 to 238 (KKQRRKRKRK).

In terms of tissue distribution, testis-specific. Expressed in melanoma, sarcoma, lung, breast, bladder, esophageal and ovarian cancers.

It is found in the membrane. This chain is FMR1 neighbor protein, found in Homo sapiens (Human).